The following is a 477-amino-acid chain: Ribulose bisphosphate carboxylase large chain (477 aa).

Positions 1–2 (MS) are excised as a propeptide. Residue proline 3 is modified to N-acetylproline. Residue lysine 14 is modified to N6,N6,N6-trimethyllysine. Substrate contacts are provided by asparagine 123 and threonine 173. Lysine 175 serves as the catalytic Proton acceptor. Lysine 177 lines the substrate pocket. The Mg(2+) site is built by lysine 201, aspartate 203, and glutamate 204. Position 201 is an N6-carboxylysine (lysine 201). Histidine 294 functions as the Proton acceptor in the catalytic mechanism. Positions 295, 327, and 379 each coordinate substrate.

Belongs to the RuBisCO large chain family. Type I subfamily. Heterohexadecamer of 8 large chains and 8 small chains; disulfide-linked. The disulfide link is formed within the large subunit homodimers. It depends on Mg(2+) as a cofactor. In terms of processing, the disulfide bond which can form in the large chain dimeric partners within the hexadecamer appears to be associated with oxidative stress and protein turnover.

The protein resides in the plastid. It localises to the chloroplast. The enzyme catalyses 2 (2R)-3-phosphoglycerate + 2 H(+) = D-ribulose 1,5-bisphosphate + CO2 + H2O. It catalyses the reaction D-ribulose 1,5-bisphosphate + O2 = 2-phosphoglycolate + (2R)-3-phosphoglycerate + 2 H(+). Its function is as follows. RuBisCO catalyzes two reactions: the carboxylation of D-ribulose 1,5-bisphosphate, the primary event in carbon dioxide fixation, as well as the oxidative fragmentation of the pentose substrate in the photorespiration process. Both reactions occur simultaneously and in competition at the same active site. This is Ribulose bisphosphate carboxylase large chain from Atropa belladonna (Belladonna).